The following is a 64-amino-acid chain: Large ribosomal subunit protein bL33 (64 aa).

It belongs to the bacterial ribosomal protein bL33 family.

The protein is Large ribosomal subunit protein bL33 of Nostoc punctiforme (strain ATCC 29133 / PCC 73102).